The sequence spans 396 residues: ATP phosphoribosyltransferase regulatory subunit (396 aa).

It belongs to the class-II aminoacyl-tRNA synthetase family. HisZ subfamily. Heteromultimer composed of HisG and HisZ subunits.

It is found in the cytoplasm. Its pathway is amino-acid biosynthesis; L-histidine biosynthesis; L-histidine from 5-phospho-alpha-D-ribose 1-diphosphate: step 1/9. Functionally, required for the first step of histidine biosynthesis. May allow the feedback regulation of ATP phosphoribosyltransferase activity by histidine. The chain is ATP phosphoribosyltransferase regulatory subunit from Alkaliphilus metalliredigens (strain QYMF).